The primary structure comprises 159 residues: U1 small nuclear ribonucleoprotein C (159 aa).

The Matrin-type zinc-finger motif lies at 4-36; it reads FYCDYCDTYLTHDSPSVRKTHCSGRKHKENVKD. 2 disordered regions span residues 63–95 and 139–159; these read PPTP…MPAP and MRPP…RPDR. The segment covering 77–95 has biased composition (pro residues); that stretch reads IPPPPSLGGPPRPGMMPAP.

This sequence belongs to the U1 small nuclear ribonucleoprotein C family. Component of the U1 snRNP. The U1 snRNP is composed of the U1 snRNA and the 7 core Sm proteins snrpb, snrpd1, snrpd2, snrpd3, snrpe, snrpf and snrpg that assemble in a heptameric protein ring on the Sm site of the small nuclear RNA to form the core snRNP, and at least 3 U1 snRNP-specific proteins snrnp70/U1-70K, snrpa/U1-A and snrpc/U1-C. snrpc/U1-C interacts with U1 snRNA and the 5' splice-site region of the pre-mRNA.

The protein resides in the nucleus. In terms of biological role, component of the spliceosomal U1 snRNP, which is essential for recognition of the pre-mRNA 5' splice-site and the subsequent assembly of the spliceosome. SNRPC/U1-C is directly involved in initial 5' splice-site recognition for both constitutive and regulated alternative splicing. The interaction with the 5' splice-site seems to precede base-pairing between the pre-mRNA and the U1 snRNA. Stimulates commitment or early (E) complex formation by stabilizing the base pairing of the 5' end of the U1 snRNA and the 5' splice-site region. The chain is U1 small nuclear ribonucleoprotein C from Xenopus laevis (African clawed frog).